The sequence spans 187 residues: MSNEEQQQPNPAAQAPEGAVTEGAAPEFNPAVLLKQLEEAQAQAQEHFDKALRTQAEMENLRKRTARDVENARKFALEKFAGELLAVRDSLEMGLDAARGETDVEKIREGTELTLKMLAQVMEKFGVEAVDPQGQRFDPDRHQAMSMQPNAELEPNTVMAVLQKGYLLNDRLLRPAMVVVSKAPEGE.

Low complexity predominate over residues 1-17 (MSNEEQQQPNPAAQAPE). The segment at 1–27 (MSNEEQQQPNPAAQAPEGAVTEGAAPE) is disordered.

It belongs to the GrpE family. Homodimer.

It is found in the cytoplasm. Functionally, participates actively in the response to hyperosmotic and heat shock by preventing the aggregation of stress-denatured proteins, in association with DnaK and GrpE. It is the nucleotide exchange factor for DnaK and may function as a thermosensor. Unfolded proteins bind initially to DnaJ; upon interaction with the DnaJ-bound protein, DnaK hydrolyzes its bound ATP, resulting in the formation of a stable complex. GrpE releases ADP from DnaK; ATP binding to DnaK triggers the release of the substrate protein, thus completing the reaction cycle. Several rounds of ATP-dependent interactions between DnaJ, DnaK and GrpE are required for fully efficient folding. The protein is Protein GrpE of Thioalkalivibrio sulfidiphilus (strain HL-EbGR7).